Reading from the N-terminus, the 405-residue chain is Probable tRNA sulfurtransferase (405 aa).

Residues 60–165 form the THUMP domain; that stretch reads TAVMDRLKGV…LNGVFLSGQT (106 aa). ATP-binding positions include 183-184, 208-209, Arg265, Gly287, and Gln296; these read ML and HF.

The protein belongs to the ThiI family.

The protein localises to the cytoplasm. The enzyme catalyses [ThiI sulfur-carrier protein]-S-sulfanyl-L-cysteine + a uridine in tRNA + 2 reduced [2Fe-2S]-[ferredoxin] + ATP + H(+) = [ThiI sulfur-carrier protein]-L-cysteine + a 4-thiouridine in tRNA + 2 oxidized [2Fe-2S]-[ferredoxin] + AMP + diphosphate. It carries out the reaction [ThiS sulfur-carrier protein]-C-terminal Gly-Gly-AMP + S-sulfanyl-L-cysteinyl-[cysteine desulfurase] + AH2 = [ThiS sulfur-carrier protein]-C-terminal-Gly-aminoethanethioate + L-cysteinyl-[cysteine desulfurase] + A + AMP + 2 H(+). It participates in cofactor biosynthesis; thiamine diphosphate biosynthesis. Its function is as follows. Catalyzes the ATP-dependent transfer of a sulfur to tRNA to produce 4-thiouridine in position 8 of tRNAs, which functions as a near-UV photosensor. Also catalyzes the transfer of sulfur to the sulfur carrier protein ThiS, forming ThiS-thiocarboxylate. This is a step in the synthesis of thiazole, in the thiamine biosynthesis pathway. The sulfur is donated as persulfide by IscS. This chain is Probable tRNA sulfurtransferase, found in Levilactobacillus brevis (strain ATCC 367 / BCRC 12310 / CIP 105137 / JCM 1170 / LMG 11437 / NCIMB 947 / NCTC 947) (Lactobacillus brevis).